A 289-amino-acid polypeptide reads, in one-letter code: Pteridine reductase 1 (289 aa).

14–41 contacts NADP(+); sequence GAAKRLGSSIAEALHAEGYTVCLHYHRS. Residue serine 176 coordinates substrate. The active-site Proton acceptor is tyrosine 195. Residue 195-199 coordinates NADP(+); the sequence is YTMAK.

It belongs to the short-chain dehydrogenases/reductases (SDR) family. As to quaternary structure, homotetramer.

It catalyses the reaction (6R)-L-erythro-5,6,7,8-tetrahydrobiopterin + 2 NADP(+) = L-erythro-biopterin + 2 NADPH + 2 H(+). It functions in the pathway cofactor biosynthesis; tetrahydrobiopterin biosynthesis; tetrahydrobiopterin from biopterin: step 1/1. Exhibits a NADPH-dependent biopterin reductase activity. Has good activity with folate and significant activity with dihydrofolate and dihydrobiopterin, but not with quinonoid dihydrobiopterin. Confers resistance to methotrexate (MTX). In Leishmania tarentolae (Sauroleishmania tarentolae), this protein is Pteridine reductase 1 (PTR1).